Consider the following 281-residue polypeptide: NADPH-dependent 7-cyano-7-deazaguanine reductase (281 aa).

81-83 is a binding site for substrate; sequence VES. 83-84 provides a ligand contact to NADPH; it reads SK. Catalysis depends on C188, which acts as the Thioimide intermediate. D195 functions as the Proton donor in the catalytic mechanism. 227-228 lines the substrate pocket; it reads HE. NADPH is bound at residue 256-257; that stretch reads RG. Residues 261-281 form a disordered region; it reads INPLRTSHPQGLPRNMRTARQ.

The protein belongs to the GTP cyclohydrolase I family. QueF type 2 subfamily. As to quaternary structure, homodimer.

It is found in the cytoplasm. It carries out the reaction 7-aminomethyl-7-carbaguanine + 2 NADP(+) = 7-cyano-7-deazaguanine + 2 NADPH + 3 H(+). Its pathway is tRNA modification; tRNA-queuosine biosynthesis. Catalyzes the NADPH-dependent reduction of 7-cyano-7-deazaguanine (preQ0) to 7-aminomethyl-7-deazaguanine (preQ1). The sequence is that of NADPH-dependent 7-cyano-7-deazaguanine reductase from Verminephrobacter eiseniae (strain EF01-2).